The chain runs to 330 residues: ADP-L-glycero-D-manno-heptose-6-epimerase (330 aa).

Residues 11-12 (FI), 32-33 (DN), Lys39, Lys54, 75-79 (EGACS), and Asn92 contribute to the NADP(+) site. The Proton acceptor role is filled by Tyr139. Lys143 is an NADP(+) binding site. Asn168 contacts substrate. NADP(+)-binding residues include Val169 and Lys177. Lys177 acts as the Proton acceptor in catalysis. Substrate contacts are provided by residues Arg179, His186, 200-203 (FGEY), Arg213, and Tyr292.

This sequence belongs to the NAD(P)-dependent epimerase/dehydratase family. HldD subfamily. As to quaternary structure, homopentamer. It depends on NADP(+) as a cofactor.

The enzyme catalyses ADP-D-glycero-beta-D-manno-heptose = ADP-L-glycero-beta-D-manno-heptose. It functions in the pathway nucleotide-sugar biosynthesis; ADP-L-glycero-beta-D-manno-heptose biosynthesis; ADP-L-glycero-beta-D-manno-heptose from D-glycero-beta-D-manno-heptose 7-phosphate: step 4/4. In terms of biological role, catalyzes the interconversion between ADP-D-glycero-beta-D-manno-heptose and ADP-L-glycero-beta-D-manno-heptose via an epimerization at carbon 6 of the heptose. In Burkholderia pseudomallei (strain 1026b), this protein is ADP-L-glycero-D-manno-heptose-6-epimerase.